Here is a 389-residue protein sequence, read N- to C-terminus: uncharacterized protein (389 aa).

It belongs to the mimivirus L17x/L18x family.

This is an uncharacterized protein from Acanthamoeba polyphaga mimivirus (APMV).